The primary structure comprises 551 residues: Histone-lysine N-methyltransferase SETDB2 (551 aa).

The MBD domain maps to 146–210 (LLGHNPLRAP…DRFSFSTQVC (65 aa)). Residues 269 to 329 (VCCDCTDGCT…RCENRVVQKG (61 aa)) form the Pre-SET domain. Residues C271, C273, C277, C283, C285, C310, C314, C316, and C321 each coordinate Zn(2+). In terms of domain architecture, SET spans 332 to 537 (VRLQVFRTPE…AGTELTWSCT (206 aa)). Position 342–344 (342–344 (HMW)) interacts with S-adenosyl-L-methionine. A disordered region spans residues 426–447 (SLAQRRDQQQFSISSETEDNRC). S-adenosyl-L-methionine-binding positions include R491 and 494–495 (TH).

This sequence belongs to the class V-like SAM-binding methyltransferase superfamily.

The protein resides in the nucleus. It is found in the chromosome. The enzyme catalyses N(6),N(6)-dimethyl-L-lysyl(9)-[histone H3] + S-adenosyl-L-methionine = N(6),N(6),N(6)-trimethyl-L-lysyl(9)-[histone H3] + S-adenosyl-L-homocysteine + H(+). Functionally, histone methyltransferase involved in left-right axis specification in early development and mitosis. Specifically trimethylates 'Lys-9' of histone H3 (H3K9me3). H3K9me3 represents a specific tag for epigenetic transcriptional repression by recruiting HP1 (CBX1, CBX3 and/or CBX5) proteins to methylated histones. Contributes to H3K9me3 in both the interspersed repetitive elements and centromere-associated repeats. Plays a role in chromosome condensation and segregation during mitosis. During early development, required to specify the left-right axis by repressing expression of FGF8, leading to negatively regulate the dorsal organizer formation. The sequence is that of Histone-lysine N-methyltransferase SETDB2 (setdb2) from Danio rerio (Zebrafish).